A 138-amino-acid chain; its full sequence is MRALWIVAVCLIGAEGNLSQFGDMINKKTGIFGIMSYIYYGCYCGWGGKGKPLDATDRCCFVHDCCYGRVNGCDPKMGTYSYSFQNGDIVCGGDDPCLRAVCECDRVAAICFAENMNTYDKKYMLYSLFDCKEESEQC.

The first 16 residues, 1–16 (MRALWIVAVCLIGAEG), serve as a signal peptide directing secretion. 7 disulfides stabilise this stretch: Cys-42-Cys-131, Cys-44-Cys-60, Cys-59-Cys-111, Cys-65-Cys-138, Cys-66-Cys-104, Cys-73-Cys-97, and Cys-91-Cys-102. Positions 43, 45, and 47 each coordinate Ca(2+). His-63 is an active-site residue. Asp-64 contacts Ca(2+). Asp-105 is a catalytic residue.

This sequence belongs to the phospholipase A2 family. Group II subfamily. D49 sub-subfamily. Requires Ca(2+) as cofactor. As to expression, expressed by the venom gland.

It localises to the secreted. It catalyses the reaction a 1,2-diacyl-sn-glycero-3-phosphocholine + H2O = a 1-acyl-sn-glycero-3-phosphocholine + a fatty acid + H(+). In terms of biological role, PLA2 catalyzes the calcium-dependent hydrolysis of the 2-acyl groups in 3-sn-phosphoglycerides. The protein is Acidic phospholipase A2 PL1 of Vipera renardi (Steppe viper).